Consider the following 210-residue polypeptide: Protein GET1 (210 aa).

Over 1–4 (MPSL) the chain is Lumenal. Residues 5–24 (LIIVLIIHVVTYLINTIGAN) traverse the membrane as a helical segment. The Cytoplasmic segment spans residues 25–110 (TIDSLLWLLY…SFDLAVKSIR (86 aa)). The stretch at 39 to 95 (NQTSQTANEQRRLKREVMQLKREMNATSSQDEFAKWAKLRRRHDKTMEEYEAKNKAL) forms a coiled coil. The helical transmembrane segment at 111 to 131 (FFSTTGLKLFLQFWCSKTPIF) threads the bilayer. Residues 132-155 (ELPRGWIPWQVEWVLSFPRAPLGT) are Lumenal-facing. The chain crosses the membrane as a helical span at residues 156–172 (VSIQIWGGVCATVVSLA). At 173-210 (GDAIGVVNVYLTSKAPKQKEPATSGENSARPMAIKKEL) the chain is on the cytoplasmic side. Positions 189–210 (KQKEPATSGENSARPMAIKKEL) are disordered.

This sequence belongs to the WRB/GET1 family. Interacts with GET3.

It localises to the endoplasmic reticulum membrane. In terms of biological role, required for the post-translational delivery of tail-anchored (TA) proteins to the endoplasmic reticulum. Acts as a membrane receptor for soluble GET3, which recognizes and selectively binds the transmembrane domain of TA proteins in the cytosol. The chain is Protein GET1 from Coccidioides immitis (strain RS) (Valley fever fungus).